A 336-amino-acid chain; its full sequence is Retinol dehydrogenase 14 (336 aa).

T5 is modified (phosphothreonine). 50 to 56 (GANSGLG) contributes to the NADP(+) binding site. Residue S192 participates in substrate binding. The active-site Proton acceptor is Y217.

The protein belongs to the short-chain dehydrogenases/reductases (SDR) family. As to expression, widely expressed.

The enzyme catalyses all-trans-retinol + NADP(+) = all-trans-retinal + NADPH + H(+). It catalyses the reaction 9-cis-retinol + NADP(+) = 9-cis-retinal + NADPH + H(+). The catalysed reaction is 11-cis-retinol + NADP(+) = 11-cis-retinal + NADPH + H(+). It participates in cofactor metabolism; retinol metabolism. Its function is as follows. Retinol dehydrogenase with a clear preference for NADP. Displays high activity towards 9-cis, 11-cis and all-trans-retinol. Shows a very weak activity towards 13-cis-retinol. Has no activity towards steroid. The polypeptide is Retinol dehydrogenase 14 (RDH14) (Homo sapiens (Human)).